The following is a 372-amino-acid chain: Adaptive-response sensory kinase SasA (372 aa).

Positions 147–360 (MVAHELRTPL…CFHFTVPVWQ (214 aa)) constitute a Histidine kinase domain. Position 150 is a phosphohistidine; by autocatalysis (His150).

Homooligomerizes. Interacts with KaiC. Participates in the KaiBC complex, whose core is composed of a KaiC homohexamer and 6 KaiB.

It carries out the reaction ATP + protein L-histidine = ADP + protein N-phospho-L-histidine.. Member of the two-component regulatory system SasA/RpaA involved in genome-wide circadian gene expression. One of several clock output pathways. Participates in the Kai clock protein complex, the main circadian regulator in cyanobacteria, via its interaction with KaiC. KaiC enhances the autophosphorylation activity of SasA, which then transfers its phosphate group to RpaA to activate it. In addition to its output function, recruits fold-shifted KaiB (KaiB(fs)) to KaiC to cooperatively form the KaiB(6):KaiC(6) complex (independent of SasA kinase activity). Required for robustness of the circadian rhythm of gene expression and is involved in clock output, also required for adaptation to light/dark cycles. This chain is Adaptive-response sensory kinase SasA, found in Prochlorococcus marinus (strain MIT 9301).